Consider the following 502-residue polypeptide: 4-hydroxy-3-methylbut-2-enyl diphosphate reductase, chloroplastic (502 aa).

The transit peptide at 1 to 48 (MQVLPQTRVQGVPSGRNLSCSKAVGGTPLRALTRDVVRPARSVNVHVV) directs the protein to the chloroplast. Cys-140 provides a ligand contact to [4Fe-4S] cluster. His-170 contributes to the (2E)-4-hydroxy-3-methylbut-2-enyl diphosphate binding site. Position 232 (Cys-232) interacts with [4Fe-4S] cluster. His-260 serves as a coordination point for (2E)-4-hydroxy-3-methylbut-2-enyl diphosphate. The Proton donor role is filled by Glu-262. Thr-325 serves as a coordination point for (2E)-4-hydroxy-3-methylbut-2-enyl diphosphate. Cys-363 is a [4Fe-4S] cluster binding site. (2E)-4-hydroxy-3-methylbut-2-enyl diphosphate-binding positions include 398 to 400 (SSN) and Ser-461.

The protein belongs to the IspH family. As to quaternary structure, homodimer. Requires [4Fe-4S] cluster as cofactor.

The protein localises to the plastid. Its subcellular location is the chloroplast stroma. It catalyses the reaction dimethylallyl diphosphate + 2 oxidized [2Fe-2S]-[ferredoxin] + H2O = (2E)-4-hydroxy-3-methylbut-2-enyl diphosphate + 2 reduced [2Fe-2S]-[ferredoxin] + 2 H(+). The enzyme catalyses isopentenyl diphosphate + 2 oxidized [2Fe-2S]-[ferredoxin] + H2O = (2E)-4-hydroxy-3-methylbut-2-enyl diphosphate + 2 reduced [2Fe-2S]-[ferredoxin] + 2 H(+). It functions in the pathway isoprenoid biosynthesis; dimethylallyl diphosphate biosynthesis; dimethylallyl diphosphate from (2E)-4-hydroxy-3-methylbutenyl diphosphate: step 1/1. It participates in isoprenoid biosynthesis; isopentenyl diphosphate biosynthesis via DXP pathway; isopentenyl diphosphate from 1-deoxy-D-xylulose 5-phosphate: step 6/6. Enzyme of the plastid non-mevalonate pathway for isoprenoid biosynthesis that converts 1-hydroxy-2-methyl-2-(E)-butenyl 4-diphosphate into isopentenyl diphosphate (IPP) and dimethylallyl diphosphate (DMAPP). The chain is 4-hydroxy-3-methylbut-2-enyl diphosphate reductase, chloroplastic from Botryococcus braunii (Green alga).